The following is a 319-amino-acid chain: Acetyl-coenzyme A carboxylase carboxyl transferase subunit alpha (319 aa).

Residues 35-296 enclose the CoA carboxyltransferase C-terminal domain; the sequence is NLDEEVQRLR…KAQLLDDLSE (262 aa).

Belongs to the AccA family. Acetyl-CoA carboxylase is a heterohexamer composed of biotin carboxyl carrier protein (AccB), biotin carboxylase (AccC) and two subunits each of ACCase subunit alpha (AccA) and ACCase subunit beta (AccD).

The protein localises to the cytoplasm. The enzyme catalyses N(6)-carboxybiotinyl-L-lysyl-[protein] + acetyl-CoA = N(6)-biotinyl-L-lysyl-[protein] + malonyl-CoA. It functions in the pathway lipid metabolism; malonyl-CoA biosynthesis; malonyl-CoA from acetyl-CoA: step 1/1. Component of the acetyl coenzyme A carboxylase (ACC) complex. First, biotin carboxylase catalyzes the carboxylation of biotin on its carrier protein (BCCP) and then the CO(2) group is transferred by the carboxyltransferase to acetyl-CoA to form malonyl-CoA. The polypeptide is Acetyl-coenzyme A carboxylase carboxyl transferase subunit alpha (Sodalis glossinidius (strain morsitans)).